We begin with the raw amino-acid sequence, 718 residues long: Mitochondrial potassium channel ATP-binding subunit (718 aa).

The transit peptide at 1–25 (MLVHLFRVGIRGGPFPGRLLPPLRF) directs the protein to the mitochondrion. The next 3 helical transmembrane spans lie at 128–148 (LLVL…NVQI), 179–199 (THLL…LVLL), and 279–299 (LLLM…GSGL). In terms of domain architecture, ABC transmembrane type-1 spans 133-420 (VAVVLALGAA…LSVLFGQVVR (288 aa)). One can recognise an ABC transporter domain in the interval 455–692 (VTFQNVCFSY…GGLYAELIRR (238 aa)). Position 490–497 (490–497 (GQSGGGKT)) interacts with ATP. The segment at 697-718 (APRTAAPLPKKPEGPRNHQHKS) is disordered.

It belongs to the ABC transporter superfamily. ABCB family. Multidrug resistance exporter (TC 3.A.1.201) subfamily. In terms of assembly, the mitochondrial potassium channel (mitoK(ATP)) is composed of 4 subunits of CCDC51/MITOK and 4 subunits of ABCB8/MITOSUR. Physically interacts with PAAT. Interacts with Neuropilin-1 (NRP1) in mitochondria.

The protein resides in the mitochondrion inner membrane. With respect to regulation, channel activity inhibited by ATP via ABCB8/MITOSUR subunit. Functionally, ATP-binding subunit of the mitochondrial ATP-gated potassium channel (mitoK(ATP)). Together with pore-forming subunit CCDC51/MITOK of the mitoK(ATP) channel, mediates ATP-dependent potassium currents across the mitochondrial inner membrane. An increase in ATP intracellular levels closes the channel, inhibiting K(+) transport, whereas a decrease in ATP levels enhances K(+) uptake in the mitochondrial matrix. Plays a role in mitochondrial iron transport. Required for maintenance of normal cardiac function, possibly by influencing mitochondrial iron export and regulating the maturation of cytosolic iron sulfur cluster-containing enzymes. This is Mitochondrial potassium channel ATP-binding subunit (ABCB8) from Pongo abelii (Sumatran orangutan).